The sequence spans 185 residues: Protein DP71L (185 aa).

Basic residues predominate over residues 1-15 (MSRRNKKRSRRRRKK). The segment at 1–38 (MSRRNKKRSRRRRKKPLNDIQPGPSKSSAQDEPIKSVS) is disordered. 2 important for host CHOP inhibition regions span residues 126 to 128 (VHF) and 170 to 174 (LSTVF).

It belongs to the asfivirus DP71L family. As to quaternary structure, interacts (via C-terminus) with host PPP1CB.

Its function is as follows. Interacts with the host phosphatase PP1 catalytic subunit (PPP1CB) and recruits it to dephosphorylate EIF2S1/eIF2alpha and therefore restores the host translation that has been shut-down by the host. Also inhibits the EIF2S1/eIF2alpha-ATF4-DDIT3/CHOP pathway. This is Protein DP71L from African swine fever virus (isolate Pig/Kenya/KEN-50/1950) (ASFV).